Here is a 408-residue protein sequence, read N- to C-terminus: UV excision repair protein RAD23 homolog B (408 aa).

The region spanning Met-1–Ala-79 is the Ubiquitin-like domain. Low complexity predominate over residues Val-80–Pro-111. The tract at residues Val-80–Leu-176 is disordered. Over residues Ala-112–Thr-122 the composition is skewed to pro residues. The segment covering Pro-123–Ala-143 has biased composition (low complexity). Positions Lys-144–Val-153 are enriched in basic and acidic residues. The segment covering Glu-154–Ser-174 has biased composition (low complexity). Phosphothreonine occurs at positions 155 and 164. Ser-174 bears the Phosphoserine mark. Position 186 is a phosphothreonine (Thr-186). Residues Gln-188–Gly-228 form the UBA 1 domain. Ser-199 carries the post-translational modification Phosphoserine. At Tyr-202 the chain carries Phosphotyrosine. The tract at residues Gln-236 to Pro-274 is disordered. Residues Ala-255–Thr-268 are compositionally biased toward low complexity. The 44-residue stretch at His-273–Ile-316 folds into the STI1 domain. The UBA 2 domain maps to Pro-363 to Gln-403.

Belongs to the RAD23 family. Component of the XPC complex composed of XPC, RAD23B and CETN2. Interacts with NGLY1 and PSMC1. Interacts with ATXN3. Interacts with PSMD4 and PSMC5. Interacts with AMFR. Interacts with VCP; the interaction is indirect and mediated by NGLY1.

The protein resides in the nucleus. Its subcellular location is the cytoplasm. In terms of biological role, multiubiquitin chain receptor involved in modulation of proteasomal degradation. Binds to polyubiquitin chains. Proposed to be capable to bind simultaneously to the 26S proteasome and to polyubiquitinated substrates and to deliver ubiquitinated proteins to the proteasome. May play a role in endoplasmic reticulum-associated degradation (ERAD) of misfolded glycoproteins by association with PNGase and delivering deglycosylated proteins to the proteasome. Its function is as follows. Involved in global genome nucleotide excision repair (GG-NER) by acting as component of the XPC complex. Cooperatively with CETN2 appears to stabilize XPC. May protect XPC from proteasomal degradation. The XPC complex is proposed to represent the first factor bound at the sites of DNA damage and together with other core recognition factors, XPA, RPA and the TFIIH complex, is part of the pre-incision (or initial recognition) complex. The XPC complex recognizes a wide spectrum of damaged DNA characterized by distortions of the DNA helix such as single-stranded loops, mismatched bubbles or single-stranded overhangs. The orientation of XPC complex binding appears to be crucial for inducing a productive NER. XPC complex is proposed to recognize and to interact with unpaired bases on the undamaged DNA strand which is followed by recruitment of the TFIIH complex and subsequent scanning for lesions in the opposite strand in a 5'-to-3' direction by the NER machinery. Cyclobutane pyrimidine dimers (CPDs) which are formed upon UV-induced DNA damage esacpe detection by the XPC complex due to a low degree of structural perurbation. Instead they are detected by the UV-DDB complex which in turn recruits and cooperates with the XPC complex in the respective DNA repair. In vitro, the XPC:RAD23B dimer is sufficient to initiate NER; it preferentially binds to cisplatin and UV-damaged double-stranded DNA and also binds to a variety of chemically and structurally diverse DNA adducts. XPC:RAD23B contacts DNA both 5' and 3' of a cisplatin lesion with a preference for the 5' side. XPC:RAD23B induces a bend in DNA upon binding. XPC:RAD23B stimulates the activity of DNA glycosylases TDG and SMUG1. This chain is UV excision repair protein RAD23 homolog B (RAD23B), found in Bos taurus (Bovine).